Consider the following 347-residue polypeptide: Sensor protein VraS (347 aa).

2 helical membrane passes run 13-33 and 43-63; these read ILVY…VNII and IFGI…CIIV. In terms of domain architecture, Histidine kinase spans 150-341; sequence RLARELHDSV…RIEVKAPLNK (192 aa). A Phosphohistidine modification is found at His-156.

Post-translationally, autophosphorylated on His-156.

It localises to the cell membrane. It carries out the reaction ATP + protein L-histidine = ADP + protein N-phospho-L-histidine.. In terms of biological role, member of the two-component regulatory system PprA/PprB involved in biofilm formation by controlling the expression of many related genes including type IVb pili major subunit flp pilin, adhesin bapA or cupE fimbriae. Also modulates quorum-sensing signal production acting on both negative and positive modulators. Functions as a heme sensor histidine kinase which is autophosphorylated at a histidine residue and transfers its phosphate group to PprB. In Staphylococcus aureus (strain COL), this protein is Sensor protein VraS (vraS).